The chain runs to 238 residues: MRKLILISLCIFFLASCSELQEVRDIKNAGMPPKYYPEPPQTQVASEGSLWRNKASLYEDKKARRVNDLVTILINESTSAQKTASTTASRDSSTNYGLDTFFGMNTDFNIHNLPLINGFYKAGNVFSPSVKGSATSDFKGDGDTARTGKITGTITAKVVEVLPNGNLVIESRKEVIVNNEKEILVLRGIIRPDDISQSNTILSQYVADAQIYLVGEGTLGDKQSQGWLVRFLDKIWPF.

Residues methionine 1–serine 16 form the signal peptide. The N-palmitoyl cysteine moiety is linked to residue cysteine 17. Cysteine 17 is lipidated: S-diacylglycerol cysteine.

It belongs to the FlgH family. In terms of assembly, the basal body constitutes a major portion of the flagellar organelle and consists of four rings (L,P,S, and M) mounted on a central rod.

Its subcellular location is the cell outer membrane. The protein localises to the bacterial flagellum basal body. In terms of biological role, assembles around the rod to form the L-ring and probably protects the motor/basal body from shearing forces during rotation. The chain is Flagellar L-ring protein from Thermodesulfovibrio yellowstonii (strain ATCC 51303 / DSM 11347 / YP87).